Reading from the N-terminus, the 449-residue chain is Cryptochrome DASH (449 aa).

A Photolyase/cryptochrome alpha/beta domain is found at 15 to 147; the sequence is RLGLFVFRND…PFHETPNNTL (133 aa).

Belongs to the DNA photolyase class-1 family. It depends on FAD as a cofactor. (6R)-5,10-methylene-5,6,7,8-tetrahydrofolate serves as cofactor.

Its function is as follows. May have a photoreceptor function. Binds DNA; probably functions as a transcriptional repressor. In Idiomarina loihiensis (strain ATCC BAA-735 / DSM 15497 / L2-TR), this protein is Cryptochrome DASH (cry).